A 420-amino-acid chain; its full sequence is Serine--tRNA ligase (420 aa).

Residue 225–227 coordinates L-serine; it reads TLE. 256-258 is an ATP binding site; sequence RQE. Residue glutamate 279 coordinates L-serine. Position 343–346 (343–346) interacts with ATP; that stretch reads EVSS. Threonine 379 provides a ligand contact to L-serine.

The protein belongs to the class-II aminoacyl-tRNA synthetase family. Type-1 seryl-tRNA synthetase subfamily. In terms of assembly, homodimer. The tRNA molecule binds across the dimer.

The protein localises to the cytoplasm. The enzyme catalyses tRNA(Ser) + L-serine + ATP = L-seryl-tRNA(Ser) + AMP + diphosphate + H(+). It catalyses the reaction tRNA(Sec) + L-serine + ATP = L-seryl-tRNA(Sec) + AMP + diphosphate + H(+). It functions in the pathway aminoacyl-tRNA biosynthesis; selenocysteinyl-tRNA(Sec) biosynthesis; L-seryl-tRNA(Sec) from L-serine and tRNA(Sec): step 1/1. In terms of biological role, catalyzes the attachment of serine to tRNA(Ser). Is also able to aminoacylate tRNA(Sec) with serine, to form the misacylated tRNA L-seryl-tRNA(Sec), which will be further converted into selenocysteinyl-tRNA(Sec). This is Serine--tRNA ligase from Mycoplasma pneumoniae (strain ATCC 29342 / M129 / Subtype 1) (Mycoplasmoides pneumoniae).